The primary structure comprises 270 residues: Regulatory protein RecX (270 aa).

It belongs to the RecX family.

The protein localises to the cytoplasm. Functionally, modulates RecA activity. This is Regulatory protein RecX from Bacillus cereus (strain 03BB102).